Consider the following 388-residue polypeptide: Dual-specificity RNA methyltransferase RlmN (388 aa).

Residue Glu109 is the Proton acceptor of the active site. The region spanning 115–354 is the Radical SAM core domain; sequence EDDRATLCVS…TIVRKTRGDD (240 aa). Cys122 and Cys359 are disulfide-bonded. [4Fe-4S] cluster contacts are provided by Cys129, Cys133, and Cys136. S-adenosyl-L-methionine is bound by residues 183–184, Ser215, 237–239, and Asn316; these read GE and SLH. Cys359 serves as the catalytic S-methylcysteine intermediate.

Belongs to the radical SAM superfamily. RlmN family. Requires [4Fe-4S] cluster as cofactor.

The protein localises to the cytoplasm. The catalysed reaction is adenosine(2503) in 23S rRNA + 2 reduced [2Fe-2S]-[ferredoxin] + 2 S-adenosyl-L-methionine = 2-methyladenosine(2503) in 23S rRNA + 5'-deoxyadenosine + L-methionine + 2 oxidized [2Fe-2S]-[ferredoxin] + S-adenosyl-L-homocysteine. It catalyses the reaction adenosine(37) in tRNA + 2 reduced [2Fe-2S]-[ferredoxin] + 2 S-adenosyl-L-methionine = 2-methyladenosine(37) in tRNA + 5'-deoxyadenosine + L-methionine + 2 oxidized [2Fe-2S]-[ferredoxin] + S-adenosyl-L-homocysteine. Its function is as follows. Specifically methylates position 2 of adenine 2503 in 23S rRNA and position 2 of adenine 37 in tRNAs. m2A2503 modification seems to play a crucial role in the proofreading step occurring at the peptidyl transferase center and thus would serve to optimize ribosomal fidelity. The sequence is that of Dual-specificity RNA methyltransferase RlmN from Salmonella arizonae (strain ATCC BAA-731 / CDC346-86 / RSK2980).